The sequence spans 77 residues: U10-lycotoxin-Ls1a (77 aa).

An N-terminal signal peptide occupies residues 1–20; it reads MKLIIFTGLVLFAIVSLIEA. A propeptide spanning residues 21-26 is cleaved from the precursor; it reads EEESGR.

The protein belongs to the neurotoxin 19 (CSTX) family. 09 (U10-Lctx) subfamily. In terms of processing, contains 4 disulfide bonds. Expressed by the venom gland.

The protein resides in the secreted. The polypeptide is U10-lycotoxin-Ls1a (Lycosa singoriensis (Wolf spider)).